Here is a 121-residue protein sequence, read N- to C-terminus: Flagellar protein FliT (121 aa).

Residues 1-50 are required for homodimerization; the sequence is MNNAPHLYFAWQQLVEKSQLMLRLATEEQWDELITSEMAYVNAVQEIAHL. Residues 60 to 98 are fliD binding; sequence MQEQLRPMLRLILDNESKVKQLLQIRMDELAKLVGQSSV.

It belongs to the FliT family. As to quaternary structure, homodimer. Interacts with FliD and FlhC.

It is found in the cytoplasm. The protein localises to the cytosol. Its function is as follows. Dual-function protein that regulates the transcription of class 2 flagellar operons and that also acts as an export chaperone for the filament-capping protein FliD. As a transcriptional regulator, acts as an anti-FlhDC factor; it directly binds FlhC, thus inhibiting the binding of the FlhC/FlhD complex to class 2 promoters, resulting in decreased expression of class 2 flagellar operons. As a chaperone, effects FliD transition to the membrane by preventing its premature polymerization, and by directing it to the export apparatus. This is Flagellar protein FliT from Escherichia coli (strain 55989 / EAEC).